The following is a 285-amino-acid chain: MTAQIIDGKAIATTITERVAKGVKLRIANGLRAPGLAVILVGGDPASQIYVGSKRRTCEAVGIHSKAFDLPETTTQDELLALIDKLNDDPDIDGILVQFPLPDGFDQTSVIERIKPDKDVDGFHPYNVGRLAQRIPLLRSCTPRGIISMLEYIGTEFHGKHAVVVGASNIVGRPMTLELLLAGCTTTTCHRFTTDLAHYVKQADILVVARGKANFIPGEWIKKGATVLDVGINRLEDGSLAGDVDFAGAKERAAWISPVPGGVGPMTVATLIENTLFACNEFHSQ.

Residues Gly166–Ser168 and Ile232 contribute to the NADP(+) site.

Belongs to the tetrahydrofolate dehydrogenase/cyclohydrolase family. As to quaternary structure, homodimer.

The enzyme catalyses (6R)-5,10-methylene-5,6,7,8-tetrahydrofolate + NADP(+) = (6R)-5,10-methenyltetrahydrofolate + NADPH. It catalyses the reaction (6R)-5,10-methenyltetrahydrofolate + H2O = (6R)-10-formyltetrahydrofolate + H(+). Its pathway is one-carbon metabolism; tetrahydrofolate interconversion. Its function is as follows. Catalyzes the oxidation of 5,10-methylenetetrahydrofolate to 5,10-methenyltetrahydrofolate and then the hydrolysis of 5,10-methenyltetrahydrofolate to 10-formyltetrahydrofolate. The polypeptide is Bifunctional protein FolD (Psychromonas ingrahamii (strain DSM 17664 / CCUG 51855 / 37)).